Reading from the N-terminus, the 352-residue chain is Selenide, water dikinase (352 aa).

Residue C23 is part of the active site. ATP contacts are provided by residues K26 and 54 to 56 (SRD). D57 lines the Mg(2+) pocket. Residues D74, D97, and 145-147 (GHS) each bind ATP. D97 contributes to the Mg(2+) binding site. Mg(2+) is bound at residue D233.

This sequence belongs to the selenophosphate synthase 1 family. Class I subfamily. As to quaternary structure, homodimer. The cofactor is Mg(2+).

The catalysed reaction is hydrogenselenide + ATP + H2O = selenophosphate + AMP + phosphate + 2 H(+). Its function is as follows. Synthesizes selenophosphate from selenide and ATP. This is Selenide, water dikinase from Shewanella sp. (strain ANA-3).